The sequence spans 468 residues: MAPSSSIIDTVANLAKRRGLVFQSGEIYGGTKSAWDYGPLGVELKENIKRQWWRAVVTSRDDVVGLDSAIILPREVWVASGHVEVFNDPLVECLNCHKRHRQDHMQEAYAEKEAKKGVTVDPDAVAMTEIVCPDCGTKGQWTEPRDFNMMLKTYLGPIETEEGLHYLRPETAQGIFVNFANVVTTARKKPPFGIGQIGKSFRNEITPGNFIFRTREFEQMEMEFFVEPSTAAEWHRYWIETRLQWYVDLGINRDNLRLYEHPKEKLSHYSDGTTDIEYKFGFAGNPWGELEGIANRTNFDLSTHSKHSGVDLSFYDQANDTRYVPYVIEPAAGLTRSLMAFLVDAYTEDEAPNAKGGVDKRTVLRLDPRLAPVKAAVLPLSRHADLSPKARDLAAELRQSWNVEFDDAGAIGRRYRRQDEIGTPYCITFDFDSLEDHAVTIRERDAMTQERVAISEVSNYLAVRLKGS.

Residues Arg101 and Glu170 each contribute to the substrate site. Residues 202–204 (RNE), 212–217 (FRTREF), 289–290 (EL), and 333–336 (GLTR) contribute to the ATP site. 217–221 (FEQME) contacts substrate. 329 to 333 (EPAAG) contributes to the substrate binding site.

Belongs to the class-II aminoacyl-tRNA synthetase family. As to quaternary structure, homodimer.

It is found in the cytoplasm. The catalysed reaction is tRNA(Gly) + glycine + ATP = glycyl-tRNA(Gly) + AMP + diphosphate. Functionally, catalyzes the attachment of glycine to tRNA(Gly). The chain is Glycine--tRNA ligase from Mycolicibacterium vanbaalenii (strain DSM 7251 / JCM 13017 / BCRC 16820 / KCTC 9966 / NRRL B-24157 / PYR-1) (Mycobacterium vanbaalenii).